The chain runs to 202 residues: Small ribosomal subunit protein uS4c (202 aa).

The region spanning 90 to 153 (MRLDNIIFRL…KSETIISKNI (64 aa)) is the S4 RNA-binding domain.

It belongs to the universal ribosomal protein uS4 family. As to quaternary structure, part of the 30S ribosomal subunit. Contacts protein S5. The interaction surface between S4 and S5 is involved in control of translational fidelity.

The protein resides in the plastid. Its subcellular location is the chloroplast. In terms of biological role, one of the primary rRNA binding proteins, it binds directly to 16S rRNA where it nucleates assembly of the body of the 30S subunit. Its function is as follows. With S5 and S12 plays an important role in translational accuracy. This Catharomnion ciliatum (Moss) protein is Small ribosomal subunit protein uS4c (rps4).